The chain runs to 341 residues: General L-amino acid-binding periplasmic protein AapJ (341 aa).

Positions 1-23 are cleaved as a signal peptide; the sequence is MKNKLLSAAIGAAVLAVGASAAS.

Belongs to the bacterial solute-binding protein 3 family. As to quaternary structure, the complex is composed of two ATP-binding proteins (AapP), two transmembrane proteins (AapM and AapQ) and a solute-binding protein (AapJ).

The protein localises to the periplasm. Functionally, part of the ABC transporter complex AapJQMP involved in uptake of L-amino acids. Affects the efflux of these amino acids as well. Essential for the development of bacteroids, the differentiated legume-symbiotic forms of this bacterium, and for the effective N(2) fixation by them. The polypeptide is General L-amino acid-binding periplasmic protein AapJ (aapJ) (Rhizobium johnstonii (strain DSM 114642 / LMG 32736 / 3841) (Rhizobium leguminosarum bv. viciae)).